Consider the following 689-residue polypeptide: Glycine--tRNA ligase beta subunit (689 aa).

The protein belongs to the class-II aminoacyl-tRNA synthetase family. In terms of assembly, tetramer of two alpha and two beta subunits.

It localises to the cytoplasm. It carries out the reaction tRNA(Gly) + glycine + ATP = glycyl-tRNA(Gly) + AMP + diphosphate. In Salmonella agona (strain SL483), this protein is Glycine--tRNA ligase beta subunit.